A 310-amino-acid polypeptide reads, in one-letter code: Formyltetrahydrofolate deformylase (310 aa).

Positions 1–30 (MGKGSMTAHATPNEPDYPPPPGGPPPPADI) are disordered. Positions 15 to 28 (PDYPPPPGGPPPPA) are enriched in pro residues. Residues 32-108 (RLLLRCHDRP…VADKFGIDYR (77 aa)) enclose the ACT domain. D255 is an active-site residue.

Belongs to the PurU family.

The catalysed reaction is (6R)-10-formyltetrahydrofolate + H2O = (6S)-5,6,7,8-tetrahydrofolate + formate + H(+). It participates in purine metabolism; IMP biosynthesis via de novo pathway; formate from 10-formyl-5,6,7,8-tetrahydrofolate: step 1/1. Functionally, catalyzes the hydrolysis of 10-formyltetrahydrofolate (formyl-FH4) to formate and tetrahydrofolate (FH4). This Mycobacterium bovis (strain ATCC BAA-935 / AF2122/97) protein is Formyltetrahydrofolate deformylase.